Here is a 228-residue protein sequence, read N- to C-terminus: Adenosylcobinamide-GDP ribazoletransferase (228 aa).

6 helical membrane passes run 24-44 (VWMLPLLTPLTAFIPSLILYL), 50-70 (NVLSILSLYWVIGLLHLDGLA), 96-116 (IAGTFAVVMILLIQVYSLFSA), 117-137 (PFYSIYLAELNSKMAMLLALA), 159-176 (VFLGGVLYALLLIPILLY), and 181-198 (IFALLGLVGGIYAVKISL).

Belongs to the CobS family. Mg(2+) serves as cofactor.

The protein localises to the cell membrane. It carries out the reaction alpha-ribazole + adenosylcob(III)inamide-GDP = adenosylcob(III)alamin + GMP + H(+). It catalyses the reaction alpha-ribazole 5'-phosphate + adenosylcob(III)inamide-GDP = adenosylcob(III)alamin 5'-phosphate + GMP + H(+). Its pathway is cofactor biosynthesis; adenosylcobalamin biosynthesis; adenosylcobalamin from cob(II)yrinate a,c-diamide: step 7/7. Its function is as follows. Joins adenosylcobinamide-GDP and alpha-ribazole to generate adenosylcobalamin (Ado-cobalamin). Also synthesizes adenosylcobalamin 5'-phosphate from adenosylcobinamide-GDP and alpha-ribazole 5'-phosphate. This Pyrococcus furiosus (strain ATCC 43587 / DSM 3638 / JCM 8422 / Vc1) protein is Adenosylcobinamide-GDP ribazoletransferase.